The chain runs to 376 residues: Protein-glutamate methylesterase/protein-glutamine glutaminase (376 aa).

One can recognise a Response regulatory domain in the interval 5-122; the sequence is KVLIVDDSAL…QHTFEDYTDE (118 aa). Asp-56 bears the 4-aspartylphosphate mark. The CheB-type methylesterase domain occupies 185 to 376; that stretch reads SKPSHKVIAL…PEKILALIKK (192 aa). Active-site residues include Ser-197, His-223, and Asp-319.

The protein belongs to the CheB family. In terms of processing, phosphorylated by CheA. Phosphorylation of the N-terminal regulatory domain activates the methylesterase activity.

The protein resides in the cytoplasm. The catalysed reaction is [protein]-L-glutamate 5-O-methyl ester + H2O = L-glutamyl-[protein] + methanol + H(+). It carries out the reaction L-glutaminyl-[protein] + H2O = L-glutamyl-[protein] + NH4(+). Involved in chemotaxis. Part of a chemotaxis signal transduction system that modulates chemotaxis in response to various stimuli. Catalyzes the demethylation of specific methylglutamate residues introduced into the chemoreceptors (methyl-accepting chemotaxis proteins or MCP) by CheR. Also mediates the irreversible deamidation of specific glutamine residues to glutamic acid. The polypeptide is Protein-glutamate methylesterase/protein-glutamine glutaminase (Hydrogenovibrio crunogenus (strain DSM 25203 / XCL-2) (Thiomicrospira crunogena)).